The following is a 310-amino-acid chain: Isoaspartyl peptidase/L-asparaginase (310 aa).

Thr-167 serves as the catalytic Nucleophile. Substrate contacts are provided by residues 195–198 and 218–221; these read RVGD and TGHG.

The protein belongs to the Ntn-hydrolase family. In terms of assembly, heterodimer of an alpha and beta chain produced by autocleavage. Post-translationally, cleaved into an alpha and beta chain by autocatalysis; this activates the enzyme. The N-terminal residue of the beta subunit is responsible for the nucleophile hydrolase activity.

The protein resides in the cytoplasm. The enzyme catalyses L-asparagine + H2O = L-aspartate + NH4(+). The catalysed reaction is Cleavage of a beta-linked Asp residue from the N-terminus of a polypeptide.. Functionally, has both L-asparaginase and beta-aspartyl peptidase activity. Does not have aspartylglucosaminidase activity and is inactive toward GlcNAc-L-Asn. Likewise, has no activity toward glutamine. In Danio rerio (Zebrafish), this protein is Isoaspartyl peptidase/L-asparaginase (asrgl1).